Here is a 106-residue protein sequence, read N- to C-terminus: Acidic phospholipase A2 PhTX-III (106 aa).

Ca(2+) is bound by residues tyrosine 23, glycine 25, and glycine 27. 5 disulfides stabilise this stretch: cysteine 24/cysteine 40, cysteine 39/cysteine 75, cysteine 45/cysteine 106, cysteine 46/cysteine 68, and cysteine 55/cysteine 66. Residue histidine 43 is part of the active site. Aspartate 44 serves as a coordination point for Ca(2+). Aspartate 69 is a catalytic residue.

It depends on Ca(2+) as a cofactor. As to expression, expressed by the venom gland.

The protein resides in the secreted. The catalysed reaction is a 1,2-diacyl-sn-glycero-3-phosphocholine + H2O = a 1-acyl-sn-glycero-3-phosphocholine + a fatty acid + H(+). Partially inhibited by magnesium ions and completely inhibited by zinc ions These divalent cations may act as competitive antagonists of the cofactor. Functionally, snake venom phospholipase A2 (PLA2) that induces inflammatory response, with local edema and release of cytokines IL-1 alpha, IL-6 and TNF-alpha. Does not exhibit myotoxic, anticoagulant and antibacterial effects. Release of pro-inflammatory cytokines may be due to mast cell degranulation, and edema may be induced by arachidonic acid that results from the PLA2 catalytic activity. PLA2 catalyzes the calcium-dependent hydrolysis of the 2-acyl groups in 3-sn-phosphoglycerides. The polypeptide is Acidic phospholipase A2 PhTX-III (Bothrocophias hyoprora (Amazonian hognose viper)).